Reading from the N-terminus, the 519-residue chain is Putative cysteine ligase BshC (519 aa).

Coiled-coil stretches lie at residues 51 to 71 and 440 to 464; these read LNALVDELMRQNPRLNDSLKE and TKLNKQLQLAVETIVDQKRRLHEQA.

It belongs to the BshC family.

In terms of biological role, involved in bacillithiol (BSH) biosynthesis. May catalyze the last step of the pathway, the addition of cysteine to glucosamine malate (GlcN-Mal) to generate BSH. The polypeptide is Putative cysteine ligase BshC (Exiguobacterium sibiricum (strain DSM 17290 / CCUG 55495 / CIP 109462 / JCM 13490 / 255-15)).